The primary structure comprises 429 residues: Adenylosuccinate synthetase (429 aa).

Residues 12-18 (GDEGKGK) and 40-42 (GHT) contribute to the GTP site. The active-site Proton acceptor is the Asp13. Residues Asp13 and Gly40 each coordinate Mg(2+). IMP-binding positions include 13–16 (DEGK), 38–41 (NAGH), Thr129, Arg143, Gln223, Thr238, and Arg302. Catalysis depends on His41, which acts as the Proton donor. Residue 298-304 (VVTGRKR) participates in substrate binding. GTP is bound by residues Arg304, 330-332 (KLD), and 412-414 (STS).

It belongs to the adenylosuccinate synthetase family. Homodimer. It depends on Mg(2+) as a cofactor.

The protein localises to the cytoplasm. It carries out the reaction IMP + L-aspartate + GTP = N(6)-(1,2-dicarboxyethyl)-AMP + GDP + phosphate + 2 H(+). Its pathway is purine metabolism; AMP biosynthesis via de novo pathway; AMP from IMP: step 1/2. Plays an important role in the de novo pathway of purine nucleotide biosynthesis. Catalyzes the first committed step in the biosynthesis of AMP from IMP. The chain is Adenylosuccinate synthetase from Maricaulis maris (strain MCS10) (Caulobacter maris).